A 540-amino-acid chain; its full sequence is Chaperonin GroEL 4 (540 aa).

ATP-binding positions include 29–32, 86–90, Gly413, 477–479, and Asp493; these read TLGP, DGTTT, and NAA.

This sequence belongs to the chaperonin (HSP60) family. Forms a cylinder of 14 subunits composed of two heptameric rings stacked back-to-back. Interacts with the co-chaperonin GroES.

It is found in the cytoplasm. The catalysed reaction is ATP + H2O + a folded polypeptide = ADP + phosphate + an unfolded polypeptide.. Together with its co-chaperonin GroES, plays an essential role in assisting protein folding. The GroEL-GroES system forms a nano-cage that allows encapsulation of the non-native substrate proteins and provides a physical environment optimized to promote and accelerate protein folding. This is Chaperonin GroEL 4 from Frankia casuarinae (strain DSM 45818 / CECT 9043 / HFP020203 / CcI3).